The chain runs to 397 residues: Elongation factor Tu (397 aa).

One can recognise a tr-type G domain in the interval 10–207; that stretch reads KPHVNVGTIG…TLDAYIPEPE (198 aa). The tract at residues 19 to 26 is G1; it reads GHVDHGKT. Position 19-26 (19-26) interacts with GTP; the sequence is GHVDHGKT. Residue threonine 26 participates in Mg(2+) binding. Residues 60 to 64 are G2; it reads GITIA. The interval 81–84 is G3; it reads DCPG. GTP-binding positions include 81–85 and 136–139; these read DCPGH and NKAD. Positions 136 to 139 are G4; the sequence is NKAD. Residues 174-176 form a G5 region; it reads SAL.

Belongs to the TRAFAC class translation factor GTPase superfamily. Classic translation factor GTPase family. EF-Tu/EF-1A subfamily. As to quaternary structure, monomer.

The protein resides in the cytoplasm. The enzyme catalyses GTP + H2O = GDP + phosphate + H(+). Functionally, GTP hydrolase that promotes the GTP-dependent binding of aminoacyl-tRNA to the A-site of ribosomes during protein biosynthesis. This is Elongation factor Tu from Hahella chejuensis (strain KCTC 2396).